A 489-amino-acid chain; its full sequence is NADH-quinone oxidoreductase subunit N (489 aa).

Helical transmembrane passes span 15-35 (APLLVVVTWATVLLLVDVFFI), 44-64 (GYLAIGGLVVAGLVGLPLWGV), 78-98 (FALTLTWIFLLIGILSITMSL), 106-126 (IEQGEYYPLIMFAVSGMILLA), 131-151 (LIVLFLGIETLSITLYILTGF), 166-186 (LVLGAFAAGFFVYGIALIFGA), 209-229 (LTLLLGGAAMVLIAFSFKVAL), 244-264 (PTPVAAFMSVGTKGGALAALV), 278-298 (WLPVLAGLTALTMVVGNLGAV), 306-326 (MLAYSSIGHAGYVMLGVMVAG), 333-353 (AFLFYMLVYALSNLGAFAVLI), 378-398 (LAVAMAIFMFSLAGVPPMAGF), 412-432 (GLPWLALVGVVTSAIAAFFYL), and 459-479 (IALAAIGTIAIGLIPAPVFAL).

This sequence belongs to the complex I subunit 2 family. NDH-1 is composed of 14 different subunits. Subunits NuoA, H, J, K, L, M, N constitute the membrane sector of the complex.

The protein localises to the cell membrane. The enzyme catalyses a quinone + NADH + 5 H(+)(in) = a quinol + NAD(+) + 4 H(+)(out). Functionally, NDH-1 shuttles electrons from NADH, via FMN and iron-sulfur (Fe-S) centers, to quinones in the respiratory chain. The immediate electron acceptor for the enzyme in this species is believed to be ubiquinone. Couples the redox reaction to proton translocation (for every two electrons transferred, four hydrogen ions are translocated across the cytoplasmic membrane), and thus conserves the redox energy in a proton gradient. The polypeptide is NADH-quinone oxidoreductase subunit N (Chloroflexus aggregans (strain MD-66 / DSM 9485)).